The primary structure comprises 117 residues: MLFLYTYVYVFLCTNNDVYNETSVMLSKTSAHCFIAEEVTTDNGLICGLAMLGKTKYQFYELFTVYSIQSLTQLASRVKKGGLIMARLILFTLCALPVLFHFILFMLQYLVFVYIEK.

This is an uncharacterized protein from Saccharomyces cerevisiae (strain ATCC 204508 / S288c) (Baker's yeast).